A 514-amino-acid chain; its full sequence is Na(+)/H(+) antiporter NhaB (514 aa).

12 helical membrane-spanning segments follow: residues 23–43, 63–83, 97–117, 120–140, 144–164, 202–222, 238–258, 303–323, 357–377, 391–411, 447–467, and 475–495; these read LALL…PFIA, PLLP…TSAA, LLLM…LFIF, LLLS…AAAF, FLDA…FYGI, LMMH…VGEP, FFLR…LTCM, AVIG…VGLI, LTVF…APII, LFYL…VGTI, ATPN…APLI, and VWMA…CVEF.

It belongs to the NhaB Na(+)/H(+) (TC 2.A.34) antiporter family.

Its subcellular location is the cell inner membrane. It carries out the reaction 2 Na(+)(in) + 3 H(+)(out) = 2 Na(+)(out) + 3 H(+)(in). Functionally, na(+)/H(+) antiporter that extrudes sodium in exchange for external protons. This is Na(+)/H(+) antiporter NhaB from Salmonella gallinarum (strain 287/91 / NCTC 13346).